An 881-amino-acid polypeptide reads, in one-letter code: DNA mismatch repair protein MutS (881 aa).

Residue 632-639 participates in ATP binding; it reads GPNMGGKS.

It belongs to the DNA mismatch repair MutS family.

Its function is as follows. This protein is involved in the repair of mismatches in DNA. It is possible that it carries out the mismatch recognition step. This protein has a weak ATPase activity. The protein is DNA mismatch repair protein MutS of Acinetobacter baylyi (strain ATCC 33305 / BD413 / ADP1).